The primary structure comprises 258 residues: DNA repair protein RecO (258 aa).

The protein belongs to the RecO family.

In terms of biological role, involved in DNA repair and RecF pathway recombination. This is DNA repair protein RecO from Oceanobacillus iheyensis (strain DSM 14371 / CIP 107618 / JCM 11309 / KCTC 3954 / HTE831).